The sequence spans 974 residues: Coiled-coil domain-containing protein 146 (974 aa).

The segment at 1–44 (MEDRSKYIAEESEDEEDEEQEEKEKKGGASTSTETEEDQEDIPS) is disordered. Residues 10 to 21 (EESEDEEDEEQE) are compositionally biased toward acidic residues. Position 12 is a phosphoserine (Ser-12). Coiled coils occupy residues 105 to 160 (VQLL…QERE), 195 to 340 (KLLK…TKEN), 421 to 474 (LPEQ…REVL), 512 to 660 (KKLE…NESG), 687 to 712 (QDIE…QRQI), and 767 to 848 (LTEE…ELSM).

In terms of assembly, interacts with CCDC38 and CCDC42. Interacts with intraflagellar transport proteins IFT20 and IFT88.

Its subcellular location is the cytoplasm. The protein localises to the cytoskeleton. It localises to the microtubule organizing center. It is found in the centrosome. The protein resides in the centriole. Its subcellular location is the cell projection. The protein localises to the cilium. It localises to the flagellum. It is found in the flagellum axoneme. The protein resides in the cilium basal body. Its subcellular location is the midbody. Essential for sperm flagellum biogenesis and male fertility. The chain is Coiled-coil domain-containing protein 146 (Ccdc146) from Rattus norvegicus (Rat).